The following is a 166-amino-acid chain: CDP-archaeol synthase (166 aa).

A run of 4 helical transmembrane segments spans residues 39–59, 61–81, 104–124, and 127–147; these read IRGF…QMYA, ISGL…LLAI, EWFL…TLLF, and IWML…LTPL.

It belongs to the CDP-archaeol synthase family. It depends on Mg(2+) as a cofactor.

The protein resides in the cell membrane. The catalysed reaction is 2,3-bis-O-(geranylgeranyl)-sn-glycerol 1-phosphate + CTP + H(+) = CDP-2,3-bis-O-(geranylgeranyl)-sn-glycerol + diphosphate. The protein operates within membrane lipid metabolism; glycerophospholipid metabolism. Functionally, catalyzes the formation of CDP-2,3-bis-(O-geranylgeranyl)-sn-glycerol (CDP-archaeol) from 2,3-bis-(O-geranylgeranyl)-sn-glycerol 1-phosphate (DGGGP) and CTP. This reaction is the third ether-bond-formation step in the biosynthesis of archaeal membrane lipids. The polypeptide is CDP-archaeol synthase (Methanospirillum hungatei JF-1 (strain ATCC 27890 / DSM 864 / NBRC 100397 / JF-1)).